The chain runs to 244 residues: Probable transcriptional regulatory protein Xfasm12_1059 (244 aa).

Belongs to the TACO1 family.

It localises to the cytoplasm. This chain is Probable transcriptional regulatory protein Xfasm12_1059, found in Xylella fastidiosa (strain M12).